The sequence spans 151 residues: Large ribosomal subunit protein uL22 (151 aa).

Belongs to the universal ribosomal protein uL22 family. Part of the 50S ribosomal subunit.

Functionally, this protein binds specifically to 23S rRNA. It makes multiple contacts with different domains of the 23S rRNA in the assembled 50S subunit and ribosome. Its function is as follows. The globular domain of the protein is located near the polypeptide exit tunnel on the outside of the subunit, while an extended beta-hairpin is found that lines the wall of the exit tunnel in the center of the 70S ribosome. This chain is Large ribosomal subunit protein uL22, found in Thermoplasma acidophilum (strain ATCC 25905 / DSM 1728 / JCM 9062 / NBRC 15155 / AMRC-C165).